Consider the following 592-residue polypeptide: Aspartate--tRNA(Asp/Asn) ligase (592 aa).

Glutamate 175 is a binding site for L-aspartate. An aspartate region spans residues 199-202 (QLFK). Residue arginine 221 coordinates L-aspartate. ATP contacts are provided by residues 221 to 223 (RDE) and glutamine 230. Histidine 450 contacts L-aspartate. ATP is bound at residue glutamate 483. Arginine 490 contributes to the L-aspartate binding site. 535–538 (GLDR) contacts ATP.

Belongs to the class-II aminoacyl-tRNA synthetase family. Type 1 subfamily. As to quaternary structure, homodimer.

The protein localises to the cytoplasm. The enzyme catalyses tRNA(Asx) + L-aspartate + ATP = L-aspartyl-tRNA(Asx) + AMP + diphosphate. In terms of biological role, aspartyl-tRNA synthetase with relaxed tRNA specificity since it is able to aspartylate not only its cognate tRNA(Asp) but also tRNA(Asn). Reaction proceeds in two steps: L-aspartate is first activated by ATP to form Asp-AMP and then transferred to the acceptor end of tRNA(Asp/Asn). The polypeptide is Aspartate--tRNA(Asp/Asn) ligase (Acinetobacter baumannii (strain AB307-0294)).